We begin with the raw amino-acid sequence, 365 residues long: Embryonic developmental protein tofu-6 (365 aa).

Positions 13 to 90 (AGFHIRNVPK…YSLKVSDHKN (78 aa)) constitute an RRM domain.

Its function is as follows. Required maternally for early embryonic cell divisions. May have a role in DNA replication. In Caenorhabditis briggsae, this protein is Embryonic developmental protein tofu-6.